The sequence spans 426 residues: MRIDIGAALDATATPGVPPDALDRLDDRVAHAHDRITAGMDGDEFGYAALNLPRTVDVDAITAAADAVADADTLVTVGIGGSALGAATLVDALGDDDLDYHALDNVDPAHVTRLLDRIDLSTSAVHVVSRSGTTAETLANFLVVRDAMDDAGVDWTARTLVTTGDDGPLRALADTHDLPVLDAPRGVPGRFAALSTVALPAAAIAGVDVGELVAGAADGRAALAGSLEDCSAYAYGATAYALDQRGAGVNAMLPYAERLETFAEWFAQLWAESLGKDGVGQTPARALGATDQHSQLQLYRAGPRDKLVTMLRPASRPDCAIPEAELADIDYLTGGDLGALLDAEFEATAASLAASGVPTVRVEVPAVDARSVGRLLFDFEAACVLAGELYGVETFTQPAVEWGKNAARELLRGEDPLPETETHIVE.

Catalysis depends on glutamate 272, which acts as the Proton donor. Active-site residues include histidine 293 and lysine 404.

Belongs to the GPI family.

Its subcellular location is the cytoplasm. It carries out the reaction alpha-D-glucose 6-phosphate = beta-D-fructose 6-phosphate. The protein operates within carbohydrate biosynthesis; gluconeogenesis. It participates in carbohydrate degradation; glycolysis; D-glyceraldehyde 3-phosphate and glycerone phosphate from D-glucose: step 2/4. Its function is as follows. Catalyzes the reversible isomerization of glucose-6-phosphate to fructose-6-phosphate. This chain is Probable glucose-6-phosphate isomerase, found in Halobacterium salinarum (strain ATCC 700922 / JCM 11081 / NRC-1) (Halobacterium halobium).